We begin with the raw amino-acid sequence, 408 residues long: uncharacterized protein (408 aa).

Disordered stretches follow at residues 218 to 265 (EPTA…TSER) and 367 to 408 (MESE…ETPN). The segment covering 369 to 379 (SEVINSSSSTS) has biased composition (low complexity). Residues 394-408 (IVEEVPETAENETPN) show a composition bias toward acidic residues.

This sequence to C.elegans C05E11.1.

This is an uncharacterized protein from Arabidopsis thaliana (Mouse-ear cress).